Reading from the N-terminus, the 70-residue chain is Protein FlmC (70 aa).

In terms of biological role, component of a type I toxin-antitoxin (TA) system. Either this protein or sequences upstream of it are required for translation of downstream flmA; this could be translationally coupled to flmA. The protein is Protein FlmC (flmC) of Escherichia coli (strain K12).